Reading from the N-terminus, the 238-residue chain is Ribonuclease PH (238 aa).

Phosphate-binding positions include R86 and G124–R126.

Belongs to the RNase PH family. As to quaternary structure, homohexameric ring arranged as a trimer of dimers.

It catalyses the reaction tRNA(n+1) + phosphate = tRNA(n) + a ribonucleoside 5'-diphosphate. Its function is as follows. Phosphorolytic 3'-5' exoribonuclease that plays an important role in tRNA 3'-end maturation. Removes nucleotide residues following the 3'-CCA terminus of tRNAs; can also add nucleotides to the ends of RNA molecules by using nucleoside diphosphates as substrates, but this may not be physiologically important. Probably plays a role in initiation of 16S rRNA degradation (leading to ribosome degradation) during starvation. In Anaeromyxobacter sp. (strain Fw109-5), this protein is Ribonuclease PH.